Here is a 311-residue protein sequence, read N- to C-terminus: MANSITHNTATVSASLNEDSLTESRLPTINDYLELCKIKVVALLVLTALVGLALAPDMGRGYFVQLLSLFGIGLLSSSAAVINHIVDSKIDAKMVRTKNRPLVRKAVSRRQALIFSAVIGTLGFSLLVFAANWLTAQMTLFALVGYAFVYTMFLKRATPQNIVIGGLAGAMPPLLGWISETGQLAAQPWILVMIIFTWTPPHFWALAIHRKADYAKAKIPMLPVTHGTDFTKTCILLYSLLLTVVCFLPFLIHMSGYLYLFVAMLINIIFIYKAVALKLSETSYGALNLFKYSILHLTLLFIALFADKFLM.

9 helical membrane-spanning segments follow: residues 38-58 (IKVVALLVLTALVGLALAPDM), 62-82 (YFVQLLSLFGIGLLSSSAAVI), 113-133 (LIFSAVIGTLGFSLLVFAANW), 134-154 (LTAQMTLFALVGYAFVYTMFL), 162-182 (IVIGGLAGAMPPLLGWISETG), 188-208 (PWILVMIIFTWTPPHFWALAI), 230-250 (FTKTCILLYSLLLTVVCFLPF), 251-271 (LIHMSGYLYLFVAMLINIIFI), and 286-306 (ALNLFKYSILHLTLLFIALFA).

It belongs to the UbiA prenyltransferase family. Protoheme IX farnesyltransferase subfamily.

The protein resides in the cell inner membrane. It carries out the reaction heme b + (2E,6E)-farnesyl diphosphate + H2O = Fe(II)-heme o + diphosphate. It functions in the pathway porphyrin-containing compound metabolism; heme O biosynthesis; heme O from protoheme: step 1/1. Converts heme B (protoheme IX) to heme O by substitution of the vinyl group on carbon 2 of heme B porphyrin ring with a hydroxyethyl farnesyl side group. The sequence is that of Protoheme IX farnesyltransferase from Psychromonas ingrahamii (strain DSM 17664 / CCUG 51855 / 37).